We begin with the raw amino-acid sequence, 858 residues long: Neurofilament medium polypeptide (858 aa).

The residue at position 2 (S2) is an N-acetylserine. A head region spans residues 2–99 (SYTMEPLGNP…KLSRSNEKEQ (98 aa)). The tract at residues 22–57 (ATYSRASASPSSGFRSQSWSRGSGSTVSSSYKRTNL) is disordered. The segment covering 30–54 (SPSSGFRSQSWSRGSGSTVSSSYKR) has biased composition (low complexity). An O-linked (GlcNAc) threonine glycan is attached at T47. An IF rod domain is found at 96–407 (EKEQLQGLND…KLLEGEETRF (312 aa)). Residues 100–131 (LQGLNDRFAGYIEKVHYLEQQNKEIEAELAAL) form a coil 1A region. The tract at residues 132–144 (RQKHAGRAQLGDA) is linker 1. The interval 145 to 243 (YEQELRELRG…EEEVAELLAQ (99 aa)) is coil 1B. Residues 244–260 (LQASHATVERKDYLKTD) are linker 12. Residues 261-282 (LTTALKEIRAQLECQSDHNMHQ) form a coil 2A region. A linker 2 region spans residues 283–286 (AEEW). The tract at residues 287-407 (FKCRYAKLTE…KLLEGEETRF (121 aa)) is coil 2B. Residues 408 to 858 (SAFSGSITGP…SHAVVKEIKE (451 aa)) are tail. O-linked (GlcNAc) threonine glycosylation occurs at T427. The tract at residues 478-788 (AAKAQEEEQE…VVTNGLDVSP (311 aa)) is disordered. Composition is skewed to acidic residues over residues 484–500 (EEQE…EEEA) and 509–524 (AAEE…EEEE). Residues 525–541 (AAKSDAAEEGGSKKEEI) show a composition bias toward basic and acidic residues. Residues 542–555 (EEKEEGEEAEEEEA) are compositionally biased toward acidic residues. Residues 556 to 572 (EAKGKAEEAGAKVEKVK) are compositionally biased toward basic and acidic residues. A compositionally biased stretch (pro residues) spans 576-586 (AKSPPKSPPKS). Residues 590 to 601 (EQAKAVQKAAAE) show a composition bias toward low complexity. Residues 602–623 (VGKDQKAEKAAEKAAKEEKAAS) show a composition bias toward basic and acidic residues. Residues 624 to 637 (PEKPATPKVTSPEK) show a composition bias toward low complexity. Basic and acidic residues-rich tracts occupy residues 651–664 (ITPE…KPTT) and 675–727 (ASPE…KAVV). Residues 728 to 743 (EESITVTKVTKVTAEV) show a composition bias toward low complexity. A compositionally biased stretch (basic and acidic residues) spans 744–771 (EVSKEARKEDIAVNGEVEEKKDEAKEKE).

The protein belongs to the intermediate filament family. In terms of processing, there are a number of repeats of the tripeptide K-S-P, NFM is phosphorylated on a number of the serines in this motif. It is thought that phosphorylation of NFM results in the formation of interfilament cross bridges that are important in the maintenance of axonal caliber. Phosphorylation seems to play a major role in the functioning of the larger neurofilament polypeptides (NF-M and NF-H), the levels of phosphorylation being altered developmentally and coincident with a change in the neurofilament function.

It localises to the cytoplasm. Its subcellular location is the cytoskeleton. It is found in the cell projection. The protein localises to the axon. Functionally, neurofilaments usually contain three intermediate filament proteins: NEFL, NEFM, and NEFH which are involved in the maintenance of neuronal caliber. May additionally cooperate with other neuronal intermediate filament proteins to form neuronal filamentous networks. This Gallus gallus (Chicken) protein is Neurofilament medium polypeptide (NEFM).